The chain runs to 154 residues: Protein Smg homolog (154 aa).

This sequence belongs to the Smg family.

This chain is Protein Smg homolog, found in Aromatoleum aromaticum (strain DSM 19018 / LMG 30748 / EbN1) (Azoarcus sp. (strain EbN1)).